The sequence spans 273 residues: Dermonecrotic toxin LarSicTox-alphaIB1b (273 aa).

His-5 is an active-site residue. Residues Glu-25 and Asp-27 each contribute to the Mg(2+) site. The active-site Nucleophile is the His-41. Cystine bridges form between Cys-45/Cys-51 and Cys-47/Cys-190. Asp-85 provides a ligand contact to Mg(2+). N-linked (GlcNAc...) asparagine glycosylation is present at Asn-250.

Belongs to the arthropod phospholipase D family. Class II subfamily. Mg(2+) serves as cofactor. In terms of tissue distribution, expressed by the venom gland.

It localises to the secreted. It carries out the reaction an N-(acyl)-sphingosylphosphocholine = an N-(acyl)-sphingosyl-1,3-cyclic phosphate + choline. The catalysed reaction is an N-(acyl)-sphingosylphosphoethanolamine = an N-(acyl)-sphingosyl-1,3-cyclic phosphate + ethanolamine. The enzyme catalyses a 1-acyl-sn-glycero-3-phosphocholine = a 1-acyl-sn-glycero-2,3-cyclic phosphate + choline. It catalyses the reaction a 1-acyl-sn-glycero-3-phosphoethanolamine = a 1-acyl-sn-glycero-2,3-cyclic phosphate + ethanolamine. Dermonecrotic toxins cleave the phosphodiester linkage between the phosphate and headgroup of certain phospholipids (sphingolipid and lysolipid substrates), forming an alcohol (often choline) and a cyclic phosphate. This toxin acts on sphingomyelin (SM). It may also act on ceramide phosphoethanolamine (CPE), lysophosphatidylcholine (LPC) and lysophosphatidylethanolamine (LPE), but not on lysophosphatidylserine (LPS), and lysophosphatidylglycerol (LPG). It acts by transphosphatidylation, releasing exclusively cyclic phosphate products as second products. Induces dermonecrosis, hemolysis, increased vascular permeability, edema, inflammatory response, and platelet aggregation. The polypeptide is Dermonecrotic toxin LarSicTox-alphaIB1b (Loxosceles arizonica (Arizona brown spider)).